We begin with the raw amino-acid sequence, 101 residues long: Small ribosomal subunit protein uS14 (101 aa).

Residues 51-72 (LPRDSSPSRQRNPCRQTGRPHG) form a disordered region. Polar residues predominate over residues 52–65 (PRDSSPSRQRNPCR).

It belongs to the universal ribosomal protein uS14 family. Part of the 30S ribosomal subunit. Contacts proteins S3 and S10.

Functionally, binds 16S rRNA, required for the assembly of 30S particles and may also be responsible for determining the conformation of the 16S rRNA at the A site. This is Small ribosomal subunit protein uS14 from Buchnera aphidicola subsp. Acyrthosiphon kondoi (Acyrthosiphon kondoi symbiotic bacterium).